The following is a 590-amino-acid chain: Muscarinic acetylcholine receptor M3 (590 aa).

At 1 to 67 (MTLHSNSTTS…DPLGGHTVWQ (67 aa)) the chain is on the extracellular side. Asparagine 6, asparagine 15, asparagine 41, and asparagine 48 each carry an N-linked (GlcNAc...) asparagine glycan. The chain crosses the membrane as a helical span at residues 68 to 91 (VVFIAFLTGILALVTIIGNILVIV). Residues 92-104 (SFKVNKQLKTVNN) lie on the Cytoplasmic side of the membrane. A helical transmembrane segment spans residues 105–130 (YFLLSLACADLIIGVISMNLFTTYII). Over 131–142 (MNRWALGNLACD) the chain is Extracellular. Residues cysteine 141 and cysteine 221 are joined by a disulfide bond. A helical transmembrane segment spans residues 143 to 164 (LWLAIDYVASNASVMNLLVISF). Over 165-184 (DRYFSITRPLTYRAKRTTKR) the chain is Cytoplasmic. The helical transmembrane segment at 185–206 (AGVMIGLAWVISFVLWAPAILF) threads the bilayer. The Extracellular portion of the chain corresponds to 207–229 (WQYFVGKRTVPPGECFIQFLSEP). Residues 230–252 (TITFGTAIAAFYMPVTIMTILYW) traverse the membrane as a helical segment. Residues 253–491 (RIYKETEKRT…SLVKEKKAAQ (239 aa)) are Cytoplasmic-facing. Positions 275 to 281 (AETENFV) match the Basolateral sorting signal motif. Residues 323–357 (SSEQMDQDHSSSDSWNNNDAAASLENSASSDEEDI) are disordered. The span at 334 to 345 (SDSWNNNDAAAS) shows a compositional bias: low complexity. Serine 385 carries the post-translational modification Phosphoserine. A helical transmembrane segment spans residues 492 to 514 (TLSAILLAFIITWTPYNIMVLVN). At 515–526 (TFCDSCIPKTFW) the chain is on the extracellular side. A disulfide bond links cysteine 517 and cysteine 520. A helical transmembrane segment spans residues 527-546 (NLGYWLCYINSTVNPVCYAL). Residues 547–590 (CNKTFRTTFKMLLLCQCDKKKRRKQQYQQRQSVIFHKRAPEQAL) are Cytoplasmic-facing.

This sequence belongs to the G-protein coupled receptor 1 family. Muscarinic acetylcholine receptor subfamily. CHRM3 sub-subfamily. As to quaternary structure, homodimer; the dimers can form tetramers. Interacts with NALCN. Interacts with TMEM147.

Its subcellular location is the cell membrane. The protein localises to the postsynaptic cell membrane. It localises to the basolateral cell membrane. The protein resides in the endoplasmic reticulum membrane. Its function is as follows. The muscarinic acetylcholine receptor mediates various cellular responses, including inhibition of adenylate cyclase, breakdown of phosphoinositides and modulation of potassium channels through the action of G proteins. Primary transducing effect is Pi turnover. The protein is Muscarinic acetylcholine receptor M3 (CHRM3) of Pongo pygmaeus (Bornean orangutan).